A 196-amino-acid polypeptide reads, in one-letter code: CASP-like protein 2U1 (196 aa).

Residues 1-11 (MAPMECVRRRN) lie on the Cytoplasmic side of the membrane. Residues 12 to 32 (VGELVLRCAATLVCMLSLMLL) form a helical membrane-spanning segment. Over 33-58 (VRDQQIAVQEVGVTSVTTQLRYSSST) the chain is Extracellular. Residues 59–79 (GLVYLVYANGLVALYCFVVVL) form a helical membrane-spanning segment. Topologically, residues 80-95 (TSSFNGGSVMRRNKSG) are cytoplasmic. The chain crosses the membrane as a helical span at residues 96 to 116 (AWALFVLDQVLACILLSAASA). Topologically, residues 117-148 (ASEIAFLVEKGAKKTIWDSKCIVYGHFCRMLE) are extracellular. Residues 149–169 (VSIATSFIAVIMLGSICVLSA) traverse the membrane as a helical segment. At 170-196 (KQLFQQYTHYARIVNMVKLKSTPNSLL) the chain is on the cytoplasmic side.

This sequence belongs to the Casparian strip membrane proteins (CASP) family. In terms of assembly, homodimer and heterodimers.

It localises to the cell membrane. In Pteridium aquilinum subsp. aquilinum (Bracken fern), this protein is CASP-like protein 2U1.